Here is a 177-residue protein sequence, read N- to C-terminus: Large ribosomal subunit protein uL6 (177 aa).

The protein belongs to the universal ribosomal protein uL6 family. As to quaternary structure, part of the 50S ribosomal subunit.

In terms of biological role, this protein binds to the 23S rRNA, and is important in its secondary structure. It is located near the subunit interface in the base of the L7/L12 stalk, and near the tRNA binding site of the peptidyltransferase center. The polypeptide is Large ribosomal subunit protein uL6 (Rickettsia bellii (strain OSU 85-389)).